The primary structure comprises 504 residues: ATP synthase subunit alpha (504 aa).

ATP is bound at residue 170–177; sequence GDRQTGKT.

This sequence belongs to the ATPase alpha/beta chains family. As to quaternary structure, F-type ATPases have 2 components, CF(1) - the catalytic core - and CF(0) - the membrane proton channel. CF(1) has five subunits: alpha(3), beta(3), gamma(1), delta(1), epsilon(1). CF(0) has four main subunits: a(1), b(1), b'(1) and c(9-12).

The protein localises to the cellular thylakoid membrane. The catalysed reaction is ATP + H2O + 4 H(+)(in) = ADP + phosphate + 5 H(+)(out). Functionally, produces ATP from ADP in the presence of a proton gradient across the membrane. The alpha chain is a regulatory subunit. The protein is ATP synthase subunit alpha of Prochlorococcus marinus (strain NATL1A).